The following is a 274-amino-acid chain: 2,3,4,5-tetrahydropyridine-2,6-dicarboxylate N-succinyltransferase (274 aa).

Positions 104 and 141 each coordinate substrate.

This sequence belongs to the transferase hexapeptide repeat family. In terms of assembly, homotrimer.

The protein resides in the cytoplasm. It catalyses the reaction (S)-2,3,4,5-tetrahydrodipicolinate + succinyl-CoA + H2O = (S)-2-succinylamino-6-oxoheptanedioate + CoA. The protein operates within amino-acid biosynthesis; L-lysine biosynthesis via DAP pathway; LL-2,6-diaminopimelate from (S)-tetrahydrodipicolinate (succinylase route): step 1/3. This chain is 2,3,4,5-tetrahydropyridine-2,6-dicarboxylate N-succinyltransferase, found in Sodalis glossinidius (strain morsitans).